The sequence spans 253 residues: Ribonuclease 3 (253 aa).

An RNase III domain is found at 29 to 157 (VDELQKTIGH…MLGAVFLDAG (129 aa)). A Mg(2+)-binding site is contributed by E70. Residue D74 is part of the active site. Residues D143 and E146 each coordinate Mg(2+). The active site involves E146. Positions 184 to 253 (DYKSQLQELT…AARAVATLDK (70 aa)) constitute a DRBM domain.

Belongs to the ribonuclease III family. As to quaternary structure, homodimer. Requires Mg(2+) as cofactor.

The protein localises to the cytoplasm. It carries out the reaction Endonucleolytic cleavage to 5'-phosphomonoester.. Its function is as follows. Digests double-stranded RNA. Involved in the processing of primary rRNA transcript to yield the immediate precursors to the large and small rRNAs (23S and 16S). Processes some mRNAs, and tRNAs when they are encoded in the rRNA operon. Processes pre-crRNA and tracrRNA of type II CRISPR loci if present in the organism. This is Ribonuclease 3 from Nitratidesulfovibrio vulgaris (strain ATCC 29579 / DSM 644 / CCUG 34227 / NCIMB 8303 / VKM B-1760 / Hildenborough) (Desulfovibrio vulgaris).